The following is a 361-amino-acid chain: Protein RecA (361 aa).

77 to 84 (GPESSGKT) provides a ligand contact to ATP.

Belongs to the RecA family.

The protein localises to the cytoplasm. Can catalyze the hydrolysis of ATP in the presence of single-stranded DNA, the ATP-dependent uptake of single-stranded DNA by duplex DNA, and the ATP-dependent hybridization of homologous single-stranded DNAs. It interacts with LexA causing its activation and leading to its autocatalytic cleavage. This chain is Protein RecA, found in Sinorhizobium fredii (strain NBRC 101917 / NGR234).